The following is a 72-amino-acid chain: Crustacean hyperglycemic hormone (72 aa).

3 disulfide bridges follow: cysteine 7/cysteine 43, cysteine 23/cysteine 39, and cysteine 26/cysteine 52. Valine 72 carries the post-translational modification Valine amide.

The protein localises to the secreted. Functionally, hormone found in the sinus gland of isopods and decapods which controls the blood sugar level. Has a secretagogue action over the amylase released from the midgut gland. May act as a stress hormone and may be involved in the control of molting and reproduction. In Penaeus schmitti (White shrimp), this protein is Crustacean hyperglycemic hormone.